The sequence spans 139 residues: ATP synthase epsilon chain (139 aa).

It belongs to the ATPase epsilon chain family. F-type ATPases have 2 components, CF(1) - the catalytic core - and CF(0) - the membrane proton channel. CF(1) has five subunits: alpha(3), beta(3), gamma(1), delta(1), epsilon(1). CF(0) has three main subunits: a, b and c.

It localises to the cell inner membrane. Functionally, produces ATP from ADP in the presence of a proton gradient across the membrane. This chain is ATP synthase epsilon chain, found in Acinetobacter baumannii (strain AB307-0294).